Here is a 699-residue protein sequence, read N- to C-terminus: Elongation factor G (699 aa).

Residues 8–288 (EDYRNFGIMA…AVVDYLPSPL (281 aa)) enclose the tr-type G domain. GTP-binding positions include 17–24 (AHIDAGKT), 86–90 (DTPGH), and 140–143 (NKMD).

It belongs to the TRAFAC class translation factor GTPase superfamily. Classic translation factor GTPase family. EF-G/EF-2 subfamily.

The protein resides in the cytoplasm. In terms of biological role, catalyzes the GTP-dependent ribosomal translocation step during translation elongation. During this step, the ribosome changes from the pre-translocational (PRE) to the post-translocational (POST) state as the newly formed A-site-bound peptidyl-tRNA and P-site-bound deacylated tRNA move to the P and E sites, respectively. Catalyzes the coordinated movement of the two tRNA molecules, the mRNA and conformational changes in the ribosome. The polypeptide is Elongation factor G (Rhizobium rhizogenes (strain K84 / ATCC BAA-868) (Agrobacterium radiobacter)).